The following is a 137-amino-acid chain: 6,7-dimethyl-8-ribityllumazine synthase (137 aa).

5-amino-6-(D-ribitylamino)uracil contacts are provided by residues phenylalanine 11, 43-45 (SFD), and 67-69 (CVI). 72–73 (DT) is a binding site for (2S)-2-hydroxy-3-oxobutyl phosphate. Residue histidine 75 is the Proton donor of the active site. Leucine 100 contacts 5-amino-6-(D-ribitylamino)uracil. A (2S)-2-hydroxy-3-oxobutyl phosphate-binding site is contributed by arginine 115.

The protein belongs to the DMRL synthase family. Forms an icosahedral capsid composed of 60 subunits, arranged as a dodecamer of pentamers.

The enzyme catalyses (2S)-2-hydroxy-3-oxobutyl phosphate + 5-amino-6-(D-ribitylamino)uracil = 6,7-dimethyl-8-(1-D-ribityl)lumazine + phosphate + 2 H2O + H(+). The protein operates within cofactor biosynthesis; riboflavin biosynthesis; riboflavin from 2-hydroxy-3-oxobutyl phosphate and 5-amino-6-(D-ribitylamino)uracil: step 1/2. Functionally, catalyzes the formation of 6,7-dimethyl-8-ribityllumazine by condensation of 5-amino-6-(D-ribitylamino)uracil with 3,4-dihydroxy-2-butanone 4-phosphate. This is the penultimate step in the biosynthesis of riboflavin. The sequence is that of 6,7-dimethyl-8-ribityllumazine synthase from Methanococcus maripaludis (strain DSM 14266 / JCM 13030 / NBRC 101832 / S2 / LL).